The following is a 712-amino-acid chain: Anaerobic ribonucleoside-triphosphate reductase (712 aa).

The ATP-cone domain maps to 3 to 92; the sequence is PHVMKRDGCK…EYRHDRDIQR (90 aa). Positions 583–708 constitute a Glycine radical domain; that stretch reads KKVNPYDKID…VKRRVKHLGN (126 aa). 4 residues coordinate Zn(2+): cysteine 644, cysteine 647, cysteine 662, and cysteine 665. Position 681 is a glycine radical (glycine 681).

Belongs to the anaerobic ribonucleoside-triphosphate reductase family. Forms a tetramer composed of two NrdD and two NrdG subunits.

The enzyme catalyses a ribonucleoside 5'-triphosphate + formate + H(+) = a 2'-deoxyribonucleoside 5'-triphosphate + CO2 + H2O. Activated under anaerobic conditions by NrdG, a tightly associated activase. Activation involves the formation of a glycyl radical at Gly-681. In terms of biological role, catalyzes the conversion of ribonucleotides into deoxyribonucleotides, which are required for DNA synthesis and repair. In Salmonella typhimurium (strain LT2 / SGSC1412 / ATCC 700720), this protein is Anaerobic ribonucleoside-triphosphate reductase (nrdD).